The primary structure comprises 380 residues: Chaperone protein DnaJ (380 aa).

Positions 5–70 constitute a J domain; the sequence is DYYEVLGVAK…QKRAAYDQYG (66 aa). The CR-type zinc-finger motif lies at 140-218; that stretch reads GYDTQIRVPS…CHGAGKVKET (79 aa). Residues Cys153, Cys156, Cys170, Cys173, Cys192, Cys195, Cys206, and Cys209 each coordinate Zn(2+). CXXCXGXG motif repeat units lie at residues 153–160, 170–177, 192–199, and 206–213; these read CEVCHGSG, CPTCSGSG, CPKCHGTG, and CGHCHGAG.

This sequence belongs to the DnaJ family. In terms of assembly, homodimer. Requires Zn(2+) as cofactor.

It is found in the cytoplasm. Participates actively in the response to hyperosmotic and heat shock by preventing the aggregation of stress-denatured proteins and by disaggregating proteins, also in an autonomous, DnaK-independent fashion. Unfolded proteins bind initially to DnaJ; upon interaction with the DnaJ-bound protein, DnaK hydrolyzes its bound ATP, resulting in the formation of a stable complex. GrpE releases ADP from DnaK; ATP binding to DnaK triggers the release of the substrate protein, thus completing the reaction cycle. Several rounds of ATP-dependent interactions between DnaJ, DnaK and GrpE are required for fully efficient folding. Also involved, together with DnaK and GrpE, in the DNA replication of plasmids through activation of initiation proteins. The polypeptide is Chaperone protein DnaJ (Paraburkholderia xenovorans (strain LB400)).